A 1048-amino-acid polypeptide reads, in one-letter code: Pleckstrin homology domain-containing family A member 6 (1048 aa).

Positions 1–22 are enriched in polar residues; sequence MSNKTGGKRPATTNSDIPNHNM. The tract at residues 1–36 is disordered; the sequence is MSNKTGGKRPATTNSDIPNHNMVSEVPPERPSVRAT. In terms of domain architecture, PH spans 59–158; sequence PVTKAGWLFK…WIQAMGEAAR (100 aa). Disordered regions lie at residues 165 to 318 and 448 to 467; these read QKSV…MNQL and SLQPRSHSVPRSPSQGSYSR. Over residues 201–233 the composition is skewed to basic and acidic residues; that stretch reads PEPEAKTRGEGDGRGCEKAERRPERPEVKKEPP. A phosphoserine mark is found at serine 247 and serine 251. A compositionally biased stretch (polar residues) spans 267–290; the sequence is AQPNGWQYHSPSRPGSTAFPSQDG. Residues serine 314, serine 459, serine 461, and serine 472 each carry the phosphoserine modification. Over residues 456 to 465 the composition is skewed to polar residues; it reads VPRSPSQGSY. The residue at position 492 (tyrosine 492) is a Phosphotyrosine. Serine 591 bears the Phosphoserine mark. Residues 663–746 form a disordered region; it reads RKNNPSRGTD…HQTLPLDTPR (84 aa). The span at 687–711 shows a compositional bias: low complexity; that stretch reads SSNSPASPLSSASLTSPLSPFSLVS. Residues 712 to 721 are compositionally biased toward polar residues; the sequence is GSQGSPTKPG. Threonine 744 carries the post-translational modification Phosphothreonine. Serine 777 is subject to Phosphoserine. At threonine 784 the chain carries Phosphothreonine. The segment at 793-858 is disordered; the sequence is ASGLTNGLSS…PAPDPSPRPA (66 aa). The segment covering 794–803 has biased composition (polar residues); it reads SGLTNGLSSQ. At serine 801 the chain carries Phosphoserine. The span at 815 to 827 shows a compositional bias: basic and acidic residues; that stretch reads GKVKMSVEEQIDR. Residues 828–842 show a composition bias toward basic residues; that stretch reads MRRHQSGSMREKRRS. A phosphoserine mark is found at serine 848, serine 854, and serine 867. Phosphothreonine is present on threonine 920. Position 940 is a phosphoserine (serine 940). Disordered stretches follow at residues 968–989 and 1005–1048; these read PIGEGDSVDVPQDSESQLQEQE and RGRM…TMRV. A Phosphothreonine modification is found at threonine 1015. The segment covering 1016-1030 has biased composition (pro residues); it reads PSPPTSPASPAPPAN. Serine 1017 bears the Phosphoserine mark. Threonine 1020 is subject to Phosphothreonine. Phosphoserine is present on residues serine 1021 and serine 1024.

As to expression, highly expressed in heart, kidney and throughout the brain.

This chain is Pleckstrin homology domain-containing family A member 6 (PLEKHA6), found in Homo sapiens (Human).